We begin with the raw amino-acid sequence, 413 residues long: SET and MYND domain-containing protein DDB_G0273591 (413 aa).

An SET domain is found at 6–311 (DGLKLSNSEL…KGDQINISYL (306 aa)). An MYND-type zinc finger spans residues 51–95 (CYNCIKLIKSPSPQQVPRCFGCNEVWYCSEKCKQDNQAKHQHYEC). Positions 205–232 (DNNNNNNNNNNNNNNNNNNNNNNNNNNN) are disordered. Residues 216–243 (NNNNNNNNNNNNNNNNNNNIEELIKLIR) adopt a coiled-coil conformation.

The protein belongs to the class V-like SAM-binding methyltransferase superfamily.

Its function is as follows. Probable methyltransferase. This chain is SET and MYND domain-containing protein DDB_G0273591, found in Dictyostelium discoideum (Social amoeba).